The sequence spans 105 residues: UPF0145 protein (105 aa).

Belongs to the UPF0145 family.

The polypeptide is UPF0145 protein (Enterococcus faecalis (Streptococcus faecalis)).